Here is a 150-residue protein sequence, read N- to C-terminus: C-type lectin 37Db (150 aa).

The first 20 residues, Met-1–Ser-20, serve as a signal peptide directing secretion. The region spanning Ile-31–Gln-148 is the C-type lectin domain. Intrachain disulfides connect Cys-52–Cys-147 and Cys-122–Cys-139. N-linked (GlcNAc...) asparagine glycosylation is found at Asn-107 and Asn-115.

The protein resides in the secreted. In terms of biological role, galactose-specific lectin that displays calcium-dependent activity. Binds to the surface of hemocytes and enhances hemocyte encapsulation and melanization. This is likely by interacting with carbohydrates on the surface of the hemocytes. Also displays agglutination activity against the Gram-negative bacterium E.coli. The polypeptide is C-type lectin 37Db (Drosophila melanogaster (Fruit fly)).